Consider the following 239-residue polypeptide: Putative ankyrin repeat protein RBE_0489 (239 aa).

3 ANK repeats span residues 23–52 (ISSR…SPNA), 80–109 (GIDT…FINA), and 113–143 (FGFT…SLTL).

The chain is Putative ankyrin repeat protein RBE_0489 from Rickettsia bellii (strain RML369-C).